The primary structure comprises 883 residues: Phosphoenolpyruvate carboxylase (883 aa).

Catalysis depends on residues histidine 138 and lysine 546.

Belongs to the PEPCase type 1 family. Mg(2+) serves as cofactor.

It carries out the reaction oxaloacetate + phosphate = phosphoenolpyruvate + hydrogencarbonate. Functionally, forms oxaloacetate, a four-carbon dicarboxylic acid source for the tricarboxylic acid cycle. The polypeptide is Phosphoenolpyruvate carboxylase (Klebsiella pneumoniae (strain 342)).